The chain runs to 103 residues: Small ribosomal subunit protein uS10 (103 aa).

The protein belongs to the universal ribosomal protein uS10 family. In terms of assembly, part of the 30S ribosomal subunit.

Functionally, involved in the binding of tRNA to the ribosomes. This is Small ribosomal subunit protein uS10 from Clostridioides difficile (strain 630) (Peptoclostridium difficile).